Reading from the N-terminus, the 122-residue chain is uncharacterized protein (122 aa).

The chain crosses the membrane as a helical span at residues 93-113 (ILRICIVFLSLKIYTLTLVII).

It is found in the membrane. This is an uncharacterized protein from Saccharomyces cerevisiae (strain ATCC 204508 / S288c) (Baker's yeast).